Consider the following 182-residue polypeptide: Testis-expressed protein 29 (182 aa).

Residues 1–56 lie on the Extracellular side of the membrane; sequence MRYTTDIKKSPPQLLKTFAVCDISLYDICDYNVTRDQCKELGCCFYKGVCYKKVVP. A helical membrane pass occupies residues 57-77; the sequence is IYVQMFSTLIVLVTGIIIITI. The Cytoplasmic segment spans residues 78–182; that stretch reads IYRIVQEIKR…PPTDPSENPP (105 aa). The tract at residues 91 to 182 is disordered; it reads LSMNSTPKAS…PPTDPSENPP (92 aa). The segment covering 115-170 has biased composition (low complexity); that stretch reads RAPSRSPSRTSSTLSSRSPTTAPTTAPTTDPATDPATDPATDPATDPATDPATDPA. Positions 171–182 are enriched in pro residues; the sequence is TAPPTDPSENPP.

The protein localises to the membrane. The sequence is that of Testis-expressed protein 29 (Tex29) from Rattus norvegicus (Rat).